The following is a 390-amino-acid chain: 3,5-dihydroxybiphenyl synthase (390 aa).

Residue Cys161 is part of the active site.

Belongs to the thiolase-like superfamily. Chalcone/stilbene synthases family. As to quaternary structure, homodimer.

It catalyses the reaction benzoyl-CoA + 3 malonyl-CoA + 3 H(+) = biphenyl-3,5-diol + 4 CO2 + 4 CoA. In terms of biological role, type III polyketide synthase involved in the biosynthesis of the phytoalexins bisphenyls and dibenzofurans. Can also use salicoyl-CoA and malonyl-CoA to produce a diketide intermediate yielding 4-hydroxycoumarin after cyclization and enolization. Can also use m-hydroxybenzoyl-CoA as substrate, producing m-hydroxybenzoyl diacetic acid lactone as a derailment product. No activity with p-hydroxybenzoyl-CoA, CoA-linked cinnamic acids or acetyl-CoA. In Sorbus aucuparia (European mountain ash), this protein is 3,5-dihydroxybiphenyl synthase (BIS1).